A 414-amino-acid chain; its full sequence is HERV-H LTR-associating protein 2 (414 aa).

The N-terminal stretch at 1–22 is a signal peptide; it reads MKAQTALSFFLILITSLSGSQG. Positions 61–131 constitute an Ig-like V-type 1 domain; sequence IHWKYQDSYK…YVGTAIQVIT (71 aa). N-linked (GlcNAc...) asparagine glycosylation is found at Asn90 and Asn103. Positions 138-222 constitute an Ig-like C1-type domain; sequence VGVFLTPVMK…ENSLLKQTWT (85 aa). Intrachain disulfides connect Cys159/Cys210 and Cys243/Cys317. The Ig-like V-type 2 domain maps to 235-328; sequence QSEHVSLSCQ…ISSDEYTLLT (94 aa). Asn318 is a glycosylation site (N-linked (GlcNAc...) asparagine). A helical membrane pass occupies residues 345–365; it reads KGLWILVPSAILAAFLLIWSV. The disordered stretch occupies residues 383–414; sequence GAQQERCCVPPGERCPSAPDNGEENVPLSGKV.

Interacts with TMIGD2. In terms of tissue distribution, expressed at high levels in colon, kidney, testis, lung and pancreas, and at lower levels in small intestine, liver and skeletal muscle. In immune cells, highly expressed in B-cells, dendritic cells and macrophages. Not detected in T-cells.

The protein localises to the membrane. Functionally, through interaction with TMIGD2, costimulates T-cells in the context of TCR-mediated activation. Enhances T-cell proliferation and cytokine production via an AKT-dependent signaling cascade. The protein is HERV-H LTR-associating protein 2 (HHLA2) of Homo sapiens (Human).